We begin with the raw amino-acid sequence, 257 residues long: Thiazole synthase (257 aa).

Residue Lys-96 is the Schiff-base intermediate with DXP of the active site. 1-deoxy-D-xylulose 5-phosphate contacts are provided by residues Gly-157, 184–185 (AG), and 206–207 (NT).

Belongs to the ThiG family. Homotetramer. Forms heterodimers with either ThiH or ThiS.

The protein resides in the cytoplasm. The catalysed reaction is [ThiS sulfur-carrier protein]-C-terminal-Gly-aminoethanethioate + 2-iminoacetate + 1-deoxy-D-xylulose 5-phosphate = [ThiS sulfur-carrier protein]-C-terminal Gly-Gly + 2-[(2R,5Z)-2-carboxy-4-methylthiazol-5(2H)-ylidene]ethyl phosphate + 2 H2O + H(+). It functions in the pathway cofactor biosynthesis; thiamine diphosphate biosynthesis. In terms of biological role, catalyzes the rearrangement of 1-deoxy-D-xylulose 5-phosphate (DXP) to produce the thiazole phosphate moiety of thiamine. Sulfur is provided by the thiocarboxylate moiety of the carrier protein ThiS. In vitro, sulfur can be provided by H(2)S. The chain is Thiazole synthase from Agrobacterium fabrum (strain C58 / ATCC 33970) (Agrobacterium tumefaciens (strain C58)).